The following is a 297-amino-acid chain: Small ribosomal subunit biogenesis GTPase RsgA (297 aa).

Residues 65-223 (RNELVRPPVA…VADTPGFSAI (159 aa)) enclose the CP-type G domain. GTP contacts are provided by residues 114-117 (TKVD) and 166-174 (GQSGAGKST). 4 residues coordinate Zn(2+): C247, C252, H254, and C260.

It belongs to the TRAFAC class YlqF/YawG GTPase family. RsgA subfamily. As to quaternary structure, monomer. Associates with 30S ribosomal subunit, binds 16S rRNA. Zn(2+) is required as a cofactor.

Its subcellular location is the cytoplasm. Its function is as follows. One of several proteins that assist in the late maturation steps of the functional core of the 30S ribosomal subunit. Helps release RbfA from mature subunits. May play a role in the assembly of ribosomal proteins into the subunit. Circularly permuted GTPase that catalyzes slow GTP hydrolysis, GTPase activity is stimulated by the 30S ribosomal subunit. This chain is Small ribosomal subunit biogenesis GTPase RsgA, found in Enterococcus faecalis (strain ATCC 700802 / V583).